Reading from the N-terminus, the 332-residue chain is Serpentine receptor class gamma-3 (332 aa).

7 consecutive transmembrane segments (helical) span residues 23-43 (FAYL…IWVS), 72-92 (LIFT…SEIV), 101-121 (IYYC…IFIA), 144-164 (IMLI…LISD), 184-204 (WASL…ITMV), 231-251 (AALI…FAFF), and 263-283 (YLRF…LLLV).

It belongs to the nematode receptor-like protein srg family.

Its subcellular location is the membrane. In Caenorhabditis elegans, this protein is Serpentine receptor class gamma-3 (srg-3).